We begin with the raw amino-acid sequence, 324 residues long: Polyketide biosynthesis acyltransferase homolog PksD (324 aa).

S99 is an active-site residue.

The protein resides in the cytoplasm. Its pathway is antibiotic biosynthesis; bacillaene biosynthesis. Its function is as follows. Probably involved in some intermediate steps for the synthesis of the antibiotic polyketide bacillaene which is involved in secondary metabolism. This Bacillus subtilis (strain 168) protein is Polyketide biosynthesis acyltransferase homolog PksD (pksD).